The sequence spans 129 residues: uncharacterized protein (129 aa).

A helical transmembrane segment spans residues isoleucine 5–threonine 25.

The protein resides in the membrane. This is an uncharacterized protein from Mycoplasma pneumoniae (strain ATCC 29342 / M129 / Subtype 1) (Mycoplasmoides pneumoniae).